Reading from the N-terminus, the 620-residue chain is Probable potassium transport system protein Kup (620 aa).

Transmembrane regions (helical) follow at residues 7–27 (LALAALGVVFGDIGTSPLYAI), 44–64 (VFGVLSLLVWSLLLIVSLKYL), 98–118 (FFLIAIGLFGAALLYGDGMIT), 135–155 (PAFHDLIIPATVTVLVILFLF), 166–186 (LFGPVILLWFVVLGVLGLVEI), 201–221 (GIMFLLNNQLHGFMVLGAVFL), 245–265 (WAFLVLPALLLNYFGQGALLL), 278–298 (LVPSWGLIPMVILSTSATIIA), 335–355 (IYVPAANWSLMVATISLVIGF), 361–381 (LAAAYGVAVTATMLISTILFY), 394–414 (VLNVMIVVFLLVDLAFFGASA), and 417–437 (LFHGAWFPLVIAAVMFTVMMT).

Belongs to the HAK/KUP transporter (TC 2.A.72) family.

It localises to the cell inner membrane. The catalysed reaction is K(+)(in) + H(+)(in) = K(+)(out) + H(+)(out). Its function is as follows. Transport of potassium into the cell. Likely operates as a K(+):H(+) symporter. In Chlorobium chlorochromatii (strain CaD3), this protein is Probable potassium transport system protein Kup.